Reading from the N-terminus, the 421-residue chain is 3-isopropylmalate dehydratase large subunit (421 aa).

Positions 302, 362, and 365 each coordinate [4Fe-4S] cluster.

Belongs to the aconitase/IPM isomerase family. LeuC type 2 subfamily. As to quaternary structure, heterodimer of LeuC and LeuD. The cofactor is [4Fe-4S] cluster.

It catalyses the reaction (2R,3S)-3-isopropylmalate = (2S)-2-isopropylmalate. It functions in the pathway amino-acid biosynthesis; L-leucine biosynthesis; L-leucine from 3-methyl-2-oxobutanoate: step 2/4. Catalyzes the isomerization between 2-isopropylmalate and 3-isopropylmalate, via the formation of 2-isopropylmaleate. The chain is 3-isopropylmalate dehydratase large subunit from Nitratiruptor sp. (strain SB155-2).